The chain runs to 417 residues: Serine hydroxymethyltransferase (417 aa).

(6S)-5,6,7,8-tetrahydrofolate contacts are provided by residues Leu-121 and 125–127 (GHL). Lys-229 carries the post-translational modification N6-(pyridoxal phosphate)lysine. 355-357 (SPF) provides a ligand contact to (6S)-5,6,7,8-tetrahydrofolate.

This sequence belongs to the SHMT family. In terms of assembly, homodimer. Pyridoxal 5'-phosphate is required as a cofactor.

The protein resides in the cytoplasm. It catalyses the reaction (6R)-5,10-methylene-5,6,7,8-tetrahydrofolate + glycine + H2O = (6S)-5,6,7,8-tetrahydrofolate + L-serine. It participates in one-carbon metabolism; tetrahydrofolate interconversion. It functions in the pathway amino-acid biosynthesis; glycine biosynthesis; glycine from L-serine: step 1/1. Catalyzes the reversible interconversion of serine and glycine with tetrahydrofolate (THF) serving as the one-carbon carrier. This reaction serves as the major source of one-carbon groups required for the biosynthesis of purines, thymidylate, methionine, and other important biomolecules. Also exhibits THF-independent aldolase activity toward beta-hydroxyamino acids, producing glycine and aldehydes, via a retro-aldol mechanism. This chain is Serine hydroxymethyltransferase, found in Shewanella sp. (strain W3-18-1).